Reading from the N-terminus, the 466-residue chain is Phosphomethylpyrimidine synthase (466 aa).

Substrate-binding positions include Asn80, Met109, Tyr139, His175, 195–197 (SRG), 236–239 (DSLR), and Glu275. His279 lines the Zn(2+) pocket. Tyr302 contributes to the substrate binding site. His343 contributes to the Zn(2+) binding site. Residues Cys423, Cys426, and Cys431 each coordinate [4Fe-4S] cluster.

This sequence belongs to the ThiC family. [4Fe-4S] cluster serves as cofactor.

It carries out the reaction 5-amino-1-(5-phospho-beta-D-ribosyl)imidazole + S-adenosyl-L-methionine = 4-amino-2-methyl-5-(phosphooxymethyl)pyrimidine + CO + 5'-deoxyadenosine + formate + L-methionine + 3 H(+). It participates in cofactor biosynthesis; thiamine diphosphate biosynthesis. In terms of biological role, catalyzes the synthesis of the hydroxymethylpyrimidine phosphate (HMP-P) moiety of thiamine from aminoimidazole ribotide (AIR) in a radical S-adenosyl-L-methionine (SAM)-dependent reaction. The polypeptide is Phosphomethylpyrimidine synthase (Synechococcus sp. (strain CC9902)).